A 199-amino-acid polypeptide reads, in one-letter code: MNSASISRLTSVIRTTSVRGFHDRSSVPRVVDDREKSSAKYNDAGYTFRYHQQGVDPLPRIPDCKVPVARPNYKVRDQWNDEAARFGQNDYIDLLGDGSVHPAQLQYHTPTWLRGFPGQHKANELIKLIHYRNLYDSKLKQNSPKRWHELRKRIKYLMMQHNYNKQDEIGRERNLGLWEEEPDYTYKDKSRRSFRDEIH.

The transit peptide at 1–15 (MNSASISRLTSVIRT) directs the protein to the mitochondrion.

Belongs to the mitochondrion-specific ribosomal protein mL51 family. As to quaternary structure, component of the mitochondrial ribosome large subunit (39S) which comprises a 16S rRNA and about 50 distinct proteins.

The protein localises to the mitochondrion. In Caenorhabditis briggsae, this protein is Large ribosomal subunit protein mL51 (mrpl-51).